The chain runs to 117 residues: MLKEFKEFALKGNVLDLAIAVVMGAAFNKIVTSLVTYIIMPLIGKIFGSVDFAKDWEFWGIKYGLFIQSIIDFIIVAIALFIFVKIANTLVKKEEPEEEIEENTVLLTEIRDLLRAK.

3 helical membrane-spanning segments follow: residues 7–27 (EFALKGNVLDLAIAVVMGAAF), 30–50 (IVTSLVTYIIMPLIGKIFGSV), and 64–84 (GLFIQSIIDFIIVAIALFIFV).

The protein belongs to the MscL family. As to quaternary structure, homopentamer.

Its subcellular location is the cell membrane. In terms of biological role, channel that opens in response to stretch forces in the membrane lipid bilayer. May participate in the regulation of osmotic pressure changes within the cell. The polypeptide is Large-conductance mechanosensitive channel (Staphylococcus haemolyticus (strain JCSC1435)).